The following is a 380-amino-acid chain: Cytochrome b (380 aa).

4 consecutive transmembrane segments (helical) span residues 33–53 (FGSL…FLAM), 77–98 (WLIR…FIHV), 113–133 (WNIG…GYVL), and 178–198 (FFAF…VHLL). Heme b is bound by residues histidine 83 and histidine 97. Heme b is bound by residues histidine 182 and histidine 196. A ubiquinone is bound at residue histidine 201. Helical transmembrane passes span 226 to 246 (IKDI…VLFF), 288 to 308 (LGGV…PLIN), 320 to 340 (ITQA…WIGG), and 347 to 367 (FTMI…MFMF).

It belongs to the cytochrome b family. The cytochrome bc1 complex contains 11 subunits: 3 respiratory subunits (MT-CYB, CYC1 and UQCRFS1), 2 core proteins (UQCRC1 and UQCRC2) and 6 low-molecular weight proteins (UQCRH/QCR6, UQCRB/QCR7, UQCRQ/QCR8, UQCR10/QCR9, UQCR11/QCR10 and a cleavage product of UQCRFS1). This cytochrome bc1 complex then forms a dimer. It depends on heme b as a cofactor.

It is found in the mitochondrion inner membrane. In terms of biological role, component of the ubiquinol-cytochrome c reductase complex (complex III or cytochrome b-c1 complex) that is part of the mitochondrial respiratory chain. The b-c1 complex mediates electron transfer from ubiquinol to cytochrome c. Contributes to the generation of a proton gradient across the mitochondrial membrane that is then used for ATP synthesis. This chain is Cytochrome b (MT-CYB), found in Calomys musculinus (Drylands vesper mouse).